A 156-amino-acid chain; its full sequence is ATP synthase subunit b (156 aa).

A helical transmembrane segment spans residues 7 to 27 (LFLQAVVFAILVWFTMKFVWP).

The protein belongs to the ATPase B chain family. As to quaternary structure, F-type ATPases have 2 components, F(1) - the catalytic core - and F(0) - the membrane proton channel. F(1) has five subunits: alpha(3), beta(3), gamma(1), delta(1), epsilon(1). F(0) has three main subunits: a(1), b(2) and c(10-14). The alpha and beta chains form an alternating ring which encloses part of the gamma chain. F(1) is attached to F(0) by a central stalk formed by the gamma and epsilon chains, while a peripheral stalk is formed by the delta and b chains.

It is found in the cell inner membrane. In terms of biological role, f(1)F(0) ATP synthase produces ATP from ADP in the presence of a proton or sodium gradient. F-type ATPases consist of two structural domains, F(1) containing the extramembraneous catalytic core and F(0) containing the membrane proton channel, linked together by a central stalk and a peripheral stalk. During catalysis, ATP synthesis in the catalytic domain of F(1) is coupled via a rotary mechanism of the central stalk subunits to proton translocation. Its function is as follows. Component of the F(0) channel, it forms part of the peripheral stalk, linking F(1) to F(0). The sequence is that of ATP synthase subunit b from Polaromonas naphthalenivorans (strain CJ2).